The chain runs to 719 residues: ATP-dependent RNA helicase SUV3 homolog, mitochondrial (719 aa).

A mitochondrion-targeting transit peptide spans 1–18 (MRRASGVLRVLGGLTQRC). The segment at 16–42 (QRCSTSSTPSSSRFPAMNSRRKRNSVR) is disordered. The 139-residue stretch at 181 to 319 (EARSVTRKIF…PAAIDIVKKL (139 aa)) folds into the Helicase ATP-binding domain. An ATP-binding site is contributed by 194-201 (GPTNSGKT). One can recognise a Helicase C-terminal domain in the interval 343–499 (KAIESYSNIE…PTYDQIETFS (157 aa)). The disordered stretch occupies residues 662 to 692 (SKAAGSSKSSEGKRENPSKSEREKPNKRSSI). A compositionally biased stretch (basic and acidic residues) spans 671–687 (SEGKRENPSKSEREKPN). Residues 693 to 717 (LEALLKRADISEDDLEQLREELNKN) are a coiled coil.

The protein belongs to the helicase family. The cofactor is Mg(2+). Mn(2+) serves as cofactor.

The protein resides in the mitochondrion matrix. Its subcellular location is the nucleus. It catalyses the reaction ATP + H2O = ADP + phosphate + H(+). Functionally, ATPase and DNA/RNA helicase able to unwind DNA/DNA, DNA/RNA and RNA/RNA duplexes in the 5'-3' direction. This is ATP-dependent RNA helicase SUV3 homolog, mitochondrial from Caenorhabditis elegans.